Here is a 355-residue protein sequence, read N- to C-terminus: UPF0421 protein BCE_2776 (355 aa).

4 helical membrane-spanning segments follow: residues Ile-19–Val-39, Phe-74–Val-94, Thr-109–Ile-129, and Leu-131–Pro-151.

Belongs to the UPF0421 family.

It is found in the cell membrane. In Bacillus cereus (strain ATCC 10987 / NRS 248), this protein is UPF0421 protein BCE_2776.